A 217-amino-acid polypeptide reads, in one-letter code: UPF0319 protein VS_II0881 (217 aa).

The N-terminal stretch at Met-1 to Ala-21 is a signal peptide.

Belongs to the UPF0319 family.

The protein is UPF0319 protein VS_II0881 of Vibrio atlanticus (strain LGP32) (Vibrio splendidus (strain Mel32)).